A 402-amino-acid chain; its full sequence is Flavohemoprotein (402 aa).

In terms of domain architecture, Globin spans 1–138 (MLSPEVRALV…LADLLIGRER (138 aa)). Residue His-85 coordinates heme b. Residues Tyr-95 and Glu-137 each act as charge relay system in the active site. Positions 149–402 (GGWTGWRAFK…AEVFGTGGVA (254 aa)) are reductase. An FAD-binding FR-type domain is found at 152–261 (TGWRAFKVVR…SPPQGDFTLD (110 aa)). Residues Tyr-190 and 206-209 (RQYS) contribute to the FAD site. 274–279 (GVGLTP) contacts NADP(+). 395 to 398 (VFGT) lines the FAD pocket.

This sequence belongs to the globin family. Two-domain flavohemoproteins subfamily. The protein in the C-terminal section; belongs to the flavoprotein pyridine nucleotide cytochrome reductase family. Heme b is required as a cofactor. The cofactor is FAD.

The catalysed reaction is 2 nitric oxide + NADPH + 2 O2 = 2 nitrate + NADP(+) + H(+). The enzyme catalyses 2 nitric oxide + NADH + 2 O2 = 2 nitrate + NAD(+) + H(+). Is involved in NO detoxification in an aerobic process, termed nitric oxide dioxygenase (NOD) reaction that utilizes O(2) and NAD(P)H to convert NO to nitrate, which protects the bacterium from various noxious nitrogen compounds. Therefore, plays a central role in the inducible response to nitrosative stress. This chain is Flavohemoprotein, found in Bordetella bronchiseptica (strain ATCC BAA-588 / NCTC 13252 / RB50) (Alcaligenes bronchisepticus).